Here is a 946-residue protein sequence, read N- to C-terminus: Protein TMA108 (946 aa).

An N-acetylserine modification is found at serine 2. 293-297 is a substrate binding site; that stretch reads MAMEN. Histidine 330 contributes to the Zn(2+) binding site. The active-site Proton acceptor is glutamate 331. Zn(2+) contacts are provided by histidine 334 and glutamate 353.

The protein belongs to the peptidase M1 family. In terms of assembly, associates with ribosomal complexes. Requires Zn(2+) as cofactor.

It localises to the cytoplasm. In terms of biological role, putative zinc aminopeptidase which may be involved in ribosome biogenesis. The protein is Protein TMA108 (TMA108) of Saccharomyces cerevisiae (strain ATCC 204508 / S288c) (Baker's yeast).